The following is a 459-amino-acid chain: 3-carboxy-cis,cis-muconate cycloisomerase (459 aa).

Belongs to the class-II fumarase/aspartase family. As to quaternary structure, homotetramer.

Its subcellular location is the cytoplasm. The enzyme catalyses 2-(carboxymethyl)-5-oxo-2,5-dihydro-2-furoate = 3-carboxy-cis,cis-muconate + H(+). Its pathway is aromatic compound metabolism; beta-ketoadipate pathway; 5-oxo-4,5-dihydro-2-furylacetate from 3-carboxy-cis,cis-muconate: step 1/2. Its function is as follows. Catalyzes an anti cycloisomerization. This is 3-carboxy-cis,cis-muconate cycloisomerase (pcaB) from Pseudomonas aeruginosa (strain ATCC 15692 / DSM 22644 / CIP 104116 / JCM 14847 / LMG 12228 / 1C / PRS 101 / PAO1).